Here is a 539-residue protein sequence, read N- to C-terminus: Glycerol kinase (539 aa).

Thr49 is an ADP binding site. ATP-binding residues include Thr49, Thr50, and Ser51. Position 49 (Thr49) interacts with sn-glycerol 3-phosphate. Arg53 contributes to the ADP binding site. Residues Arg119, Glu120, Tyr171, and Asp280 each contribute to the sn-glycerol 3-phosphate site. Positions 119, 120, 171, 280, and 281 each coordinate glycerol. 2 residues coordinate ADP: Thr302 and Gly345. ATP-binding residues include Thr302, Gly345, Gln349, and Gly446. Gly446 and Asn450 together coordinate ADP.

This sequence belongs to the FGGY kinase family.

The catalysed reaction is glycerol + ATP = sn-glycerol 3-phosphate + ADP + H(+). Its pathway is polyol metabolism; glycerol degradation via glycerol kinase pathway; sn-glycerol 3-phosphate from glycerol: step 1/1. With respect to regulation, inhibited by fructose 1,6-bisphosphate (FBP). Key enzyme in the regulation of glycerol uptake and metabolism. Catalyzes the phosphorylation of glycerol to yield sn-glycerol 3-phosphate. The protein is Glycerol kinase of Rhodopirellula baltica (strain DSM 10527 / NCIMB 13988 / SH1).